Reading from the N-terminus, the 240-residue chain is Adiponectin (240 aa).

Residues 1 to 17 (MLLQGALLLLLALPSHG) form the signal peptide. Residue lysine 28 is modified to 5-hydroxylysine. O-linked (Gal...) hydroxylysine glycosylation is present at lysine 28. The interval 29–100 (GACAGWMAGI…GTPGRKGEPG (72 aa)) is disordered. Cysteine 31 is modified (S-(2-succinyl)cysteine). 4-hydroxyproline is present on residues proline 39, proline 42, and proline 48. The 60-residue stretch at 43 to 102 (GHNGTPGRDGRDGTPGEKGEKGDPGLVGPKGDTGETGITGIEGPRGFPGTPGRKGEPGES) folds into the Collagen-like domain. Residues 50–65 (RDGRDGTPGEKGEKGD) are compositionally biased toward basic and acidic residues. 5-hydroxylysine occurs at positions 60, 63, and 72. 3 O-linked (Gal...) hydroxylysine glycosylation sites follow: lysine 60, lysine 63, and lysine 72. At proline 86 the chain carries 4-hydroxyproline. The residue at position 96 (lysine 96) is a 5-hydroxylysine. Residue lysine 96 is glycosylated (O-linked (Gal...) hydroxylysine). One can recognise a C1q domain in the interval 103-240 (AYVYRSAFSV…GFLLYHNIVE (138 aa)).

As to quaternary structure, homomultimer. Forms trimers, hexamers and 12- to 18-mers. The trimers (low molecular weight complexes / LMW) are assembled via non-covalent interactions of the collagen-like domains in a triple helix and hydrophobic interactions within the globular C1q domain. Several trimers can associate to form disulfide-linked hexamers (middle molecular weight complexes / MMW) and larger complexes (higher molecular weight / HMW). The HMW-complex assembly is also modulated by the degree of lysine hydroxylation and glycosylation. LMW, MMW and HMW complexes bind to HBEGF, MMW and HMW complexes bind to PDGFB, and HMW complex binds to FGF2. Interacts with CTRP9 via the C1q domain (heterotrimeric complex). In terms of processing, HMW complexes are more extensively glycosylated than smaller oligomers. Hydroxylation and glycosylation of the lysine residues within the collagen-like domain of adiponectin seem to be critically involved in regulating the formation and/or secretion of HMW complexes and consequently contribute to the insulin-sensitizing activity of adiponectin in hepatocytes. O-glycosylated. O-linked glycans on hydroxylysine residues consist of Glc-Gal disaccharides bound to the oxygen atom of post-translationally added hydroxyl groups. O-linked glycosylations elsewhere disialylated with the structure Neu5Acalpha2-&gt;8Neu5Acalpha2-&gt;3Gal. Sialylated by alpha 2,8-sialyltransferase III. Desialylated forms are rapidly cleared from the circulation. Not N-glycosylated. Post-translationally, succination of Cys-31 by the Krebs cycle intermediate fumarate, which leads to S-(2-succinyl)cysteine residues, inhibits polymerization and secretion of adiponectin. Adiponectin is a major target for succination in both adipocytes and adipose tissue of diabetic mammals. It was proposed that succination of proteins is a biomarker of mitochondrial stress and accumulation of Krebs cycle intermediates in adipose tissue in diabetes and that succination of adiponectin may contribute to the decrease in plasma adiponectin in diabetes.

The protein localises to the secreted. Polymerization and secretion of adiponectin is inhibited by succination of cysteine residues by the Krebs cycle intermediate fumarate, which leads to S-(2-succinyl)cysteine residues. In terms of biological role, important adipokine involved in the control of fat metabolism and insulin sensitivity, with direct anti-diabetic, anti-atherogenic and anti-inflammatory activities. Stimulates AMPK phosphorylation and activation in the liver and the skeletal muscle, enhancing glucose utilization and fatty-acid combustion. Antagonizes TNF-alpha by negatively regulating its expression in various tissues such as liver and macrophages, and also by counteracting its effects. Inhibits endothelial NF-kappa-B signaling through a cAMP-dependent pathway. May play a role in cell growth, angiogenesis and tissue remodeling by binding and sequestering various growth factors with distinct binding affinities, depending on the type of complex, LMW, MMW or HMW. The polypeptide is Adiponectin (ADIPOQ) (Bos taurus (Bovine)).